A 217-amino-acid chain; its full sequence is Uracil-DNA glycosylase (217 aa).

Aspartate 62 serves as the catalytic Proton acceptor.

The protein belongs to the uracil-DNA glycosylase (UDG) superfamily. UNG family.

The protein localises to the cytoplasm. It carries out the reaction Hydrolyzes single-stranded DNA or mismatched double-stranded DNA and polynucleotides, releasing free uracil.. Excises uracil residues from the DNA which can arise as a result of misincorporation of dUMP residues by DNA polymerase or due to deamination of cytosine. This Streptococcus pyogenes serotype M4 (strain MGAS10750) protein is Uracil-DNA glycosylase.